A 254-amino-acid polypeptide reads, in one-letter code: Probable septum site-determining protein MinC (254 aa).

Belongs to the MinC family. In terms of assembly, interacts with MinD and FtsZ.

Cell division inhibitor that blocks the formation of polar Z ring septums. Rapidly oscillates between the poles of the cell to destabilize FtsZ filaments that have formed before they mature into polar Z rings. Prevents FtsZ polymerization. This chain is Probable septum site-determining protein MinC, found in Burkholderia ambifaria (strain ATCC BAA-244 / DSM 16087 / CCUG 44356 / LMG 19182 / AMMD) (Burkholderia cepacia (strain AMMD)).